Consider the following 154-residue polypeptide: 6,7-dimethyl-8-ribityllumazine synthase (154 aa).

Residues 22-23, 56-58, and 80-82 contribute to the 5-amino-6-(D-ribitylamino)uracil site; these read FN, AFE, and TVI. 85-86 is a binding site for (2S)-2-hydroxy-3-oxobutyl phosphate; it reads AT. His88 functions as the Proton donor in the catalytic mechanism. Phe113 is a binding site for 5-amino-6-(D-ribitylamino)uracil. Arg127 lines the (2S)-2-hydroxy-3-oxobutyl phosphate pocket.

This sequence belongs to the DMRL synthase family. Forms an icosahedral capsid composed of 60 subunits, arranged as a dodecamer of pentamers. Can interact with riboflavin synthase, forming a lumazine synthase/riboflavin synthase complex, also designated as 'heavy riboflavin synthase complex', which consists of a trimer of riboflavin synthase enclosed within the icosahedral structure composed of 60 subunits of 6,7-dimethyl-8-ribityllumazine synthase.

The catalysed reaction is (2S)-2-hydroxy-3-oxobutyl phosphate + 5-amino-6-(D-ribitylamino)uracil = 6,7-dimethyl-8-(1-D-ribityl)lumazine + phosphate + 2 H2O + H(+). Its pathway is cofactor biosynthesis; riboflavin biosynthesis; riboflavin from 2-hydroxy-3-oxobutyl phosphate and 5-amino-6-(D-ribitylamino)uracil: step 1/2. Functionally, catalyzes the formation of 6,7-dimethyl-8-ribityllumazine by condensation of 5-amino-6-(D-ribitylamino)uracil with 3,4-dihydroxy-2-butanone 4-phosphate. This is the penultimate step in the biosynthesis of riboflavin. Is able to use the non-natural R enantiomer of 3,4-dihydroxy-2-butanone 4-phosphate as a substrate, but with less efficiency than the natural S enantiomer. Cannot use unphosphorylated 3,4-dihydroxy-2-butanone, 3,4-dihydroxy-2-butanone 3-phosphate or diacetyl as substrates. The protein is 6,7-dimethyl-8-ribityllumazine synthase (ribH) of Bacillus subtilis (strain 168).